Consider the following 354-residue polypeptide: MERFLTKMPIKSKANEVPKKEAVAKKETPKVARKATKKDTPKELKDKENAGDDNTPKQTKGRPGRPAAKRKNLDTPDVKDEKIAMEEENPPKRRSSRLTRSTRSMAEDGSPSPEKEKPEKLPFIKYKGAIKYFTESQDIAASADDVLQWVEKQKDDVVPMAFDMEWPFSFQTGPGKSSVIQICVDEKCCYIYQLTNVKKLPAALVALINHPKVRLHGVNIKNDFRKLARDFPEVTAEPLIEKCVDLGLWCNEVCETGGRWSLERLTNFIAKKAMDKSKKVRMSKWHVIPLDENQLMYAAIDVYIGQVIYRELERREKVKIKNEEEFKEKNGDAAFKAMKTLGETFLTKINEVTL.

The segment at 1–120 is disordered; the sequence is MERFLTKMPI…PSPEKEKPEK (120 aa). 2 stretches are compositionally biased toward basic and acidic residues: residues 13 to 30 and 37 to 50; these read KANEVPKKEAVAKKETPK and KKDTPKELKDKENA. Basic residues predominate over residues 59-70; it reads TKGRPGRPAAKR. Over residues 71-91 the composition is skewed to basic and acidic residues; it reads KNLDTPDVKDEKIAMEEENPP. Serine 104, serine 110, and serine 112 each carry phosphoserine. The 3'-5' exonuclease domain occupies 149 to 314; sequence WVEKQKDDVV…GQVIYRELER (166 aa). Mg(2+) is bound by residues aspartate 163, glutamate 165, and aspartate 301.

This sequence belongs to the WRNexo family.

It localises to the nucleus. Its function is as follows. Has exonuclease activity on both single-stranded and duplex templates bearing overhangs, but not blunt ended duplex DNA, and cleaves in a 3'-5' direction. Essential for the formation of DNA replication focal centers. Has an important role in maintaining genome stability. The chain is 3'-5' exonuclease from Drosophila simulans (Fruit fly).